A 712-amino-acid chain; its full sequence is Sesterterpene synthase btcA (712 aa).

The terpene cyclase stretch occupies residues 1-332 (MTTIWEHCVD…CANCPRHHAW (332 aa)). Residue Asp-96 participates in Mg(2+) binding. Residues Asp-96, Asn-234, 238-242 (SWDRE), and 328-329 (RH) contribute to the substrate site. A DDXXD 1 motif is present at residues 96–100 (DDLCD). The NSE/DTE signature appears at 234 to 242 (NDYWSWDRE). The prenyltransferase stretch occupies residues 333–706 (RDEESSPSER…VMRIVLSRLS (374 aa)). The segment at 334–373 (DEESSPSERSFSPSNEGIEDPRLSPGASTTSSMSQKSSPA) is disordered. Low complexity-rich tracts occupy residues 340 to 349 (SERSFSPSNE) and 361 to 373 (STTS…SSPA). 3 residues coordinate isopentenyl diphosphate: Lys-414, Arg-417, and His-446. Mg(2+)-binding residues include Asp-453 and Asp-457. Positions 453-457 (DDIED) match the DDXXD 2 motif. Arg-462 is a dimethylallyl diphosphate binding site. Isopentenyl diphosphate is bound at residue Arg-463. Dimethylallyl diphosphate contacts are provided by Lys-540, Thr-541, Gln-580, Asn-587, Lys-597, and Lys-607.

It in the N-terminal section; belongs to the terpene synthase family. The protein in the C-terminal section; belongs to the FPP/GGPP synthase family. In terms of assembly, hexamer. It depends on Mg(2+) as a cofactor.

It catalyses the reaction isopentenyl diphosphate + (2E,6E)-farnesyl diphosphate = (2E,6E,10E)-geranylgeranyl diphosphate + diphosphate. The enzyme catalyses isopentenyl diphosphate + (2E,6E,10E)-geranylgeranyl diphosphate = (2E,6E,10E,14E)-geranylfarnesyl diphosphate + diphosphate. Its pathway is secondary metabolite biosynthesis; terpenoid biosynthesis. In terms of biological role, bifunctional terpene synthase; part of the gene cluster that mediates the biosynthesis of betaestacins. The bifunctional terpene synthase btcA converts isopentenyl diphosphate (IPP) and dimethylallyl diphosphate (DMAPP) into the sesterterpene betaestacin I. The C-terminal prenyltransferase (PT) domain of btcA catalyzes formation of GFPP, whereas the N-terminal terpene cyclase (TC) domain catalyzes the cyclization of GFPP into betaestacin I. The cytochrome P450 monooxygenase btcB oxidizes the C25 methyl group of betaestacin I to yield the carboxylic acid betaestacin IV via the alcohol betaestacin III. The cytochrome P450 monooxygenase btcC further catalyzes the multistep oxidation of betaestacin IV to produce several compounds, including betaestacins Va, Vb, Vc and VI. This chain is Sesterterpene synthase btcA, found in Colletotrichum orbiculare (strain 104-T / ATCC 96160 / CBS 514.97 / LARS 414 / MAFF 240422) (Cucumber anthracnose fungus).